Reading from the N-terminus, the 189-residue chain is UPF0301 protein CTA_0231 (189 aa).

The protein belongs to the UPF0301 (AlgH) family.

This is UPF0301 protein CTA_0231 from Chlamydia trachomatis serovar A (strain ATCC VR-571B / DSM 19440 / HAR-13).